We begin with the raw amino-acid sequence, 359 residues long: 3-dehydroquinate synthase (359 aa).

Residues 106-110, 130-131, lysine 143, and lysine 152 contribute to the NAD(+) site; these read GVVGD and TS. Glutamate 185, histidine 246, and histidine 263 together coordinate Zn(2+).

The protein belongs to the sugar phosphate cyclases superfamily. Dehydroquinate synthase family. It depends on Co(2+) as a cofactor. The cofactor is Zn(2+). NAD(+) serves as cofactor.

Its subcellular location is the cytoplasm. It catalyses the reaction 7-phospho-2-dehydro-3-deoxy-D-arabino-heptonate = 3-dehydroquinate + phosphate. Its pathway is metabolic intermediate biosynthesis; chorismate biosynthesis; chorismate from D-erythrose 4-phosphate and phosphoenolpyruvate: step 2/7. In terms of biological role, catalyzes the conversion of 3-deoxy-D-arabino-heptulosonate 7-phosphate (DAHP) to dehydroquinate (DHQ). This chain is 3-dehydroquinate synthase, found in Clostridium kluyveri (strain ATCC 8527 / DSM 555 / NBRC 12016 / NCIMB 10680 / K1).